A 600-amino-acid polypeptide reads, in one-letter code: Probable tripeptidyl-peptidase SED4 (600 aa).

Positions 1–22 (MVSFTLRAIGACLIGLPALITA) are cleaved as a signal peptide. The propeptide at 23–202 (APTSHVSNGF…SVFTSDLEMT (180 aa)) is removed in mature form. N-linked (GlcNAc...) asparagine glycosylation is found at Asn-210 and Asn-281. A Peptidase S53 domain is found at 212–600 (TITPDCIREL…FEKLSKLVLI (389 aa)). Residues Glu-288 and Asp-292 each act as charge relay system in the active site. Asn-323 and Asn-404 each carry an N-linked (GlcNAc...) asparagine glycan. Ser-504 functions as the Charge relay system in the catalytic mechanism. Residues Asp-546, Ile-547, Gly-579, and Asp-581 each coordinate Ca(2+).

Requires Ca(2+) as cofactor.

It localises to the secreted. Its subcellular location is the extracellular space. The catalysed reaction is Release of an N-terminal tripeptide from a polypeptide.. Functionally, secreted tripeptidyl-peptidase which degrades proteins at acidic pHs and is involved in virulence. The sequence is that of Probable tripeptidyl-peptidase SED4 (SED4) from Trichophyton verrucosum (strain HKI 0517).